The following is a 147-amino-acid chain: Deoxyuridine 5'-triphosphate nucleotidohydrolase (147 aa).

Substrate is bound by residues 67–69 (RSG), N80, and 84–86 (TID).

It belongs to the dUTPase family. Requires Mg(2+) as cofactor.

It catalyses the reaction dUTP + H2O = dUMP + diphosphate + H(+). It functions in the pathway pyrimidine metabolism; dUMP biosynthesis; dUMP from dCTP (dUTP route): step 2/2. Functionally, this enzyme is involved in nucleotide metabolism: it produces dUMP, the immediate precursor of thymidine nucleotides and it decreases the intracellular concentration of dUTP so that uracil cannot be incorporated into DNA. The polypeptide is Deoxyuridine 5'-triphosphate nucleotidohydrolase (Anaeromyxobacter dehalogenans (strain 2CP-C)).